A 542-amino-acid chain; its full sequence is Sialate O-acetylesterase (542 aa).

The first 23 residues, 1–23, serve as a signal peptide directing secretion; the sequence is MVSPRPVGLMLLLIIARVSRGAG. N-linked (GlcNAc...) asparagine glycans are attached at residues asparagine 107, asparagine 138, asparagine 188, asparagine 294, asparagine 357, asparagine 428, asparagine 449, and asparagine 463.

In terms of assembly, disulfide-linked heterodimer of a small subunit and a large subunit. The two subunits are derived from a single precursor by proteolytic cleavage. In terms of processing, glycosylated. In terms of tissue distribution, widely expressed.

Its subcellular location is the lysosome. It carries out the reaction N-acetyl-9-O-acetylneuraminate + H2O = N-acetylneuraminate + acetate + H(+). The enzyme catalyses an Ac-O-9-sialoglycoconjugate + H2O = a sialoglycoconjugate + acetate + H(+). Its activity is regulated as follows. Inhibited by diisopropyl fluorophosphate and diethyl-P-nitrophenyl phosphate. In terms of biological role, catalyzes the removal of O-acetyl ester groups from position 9 of the free diacetylated sialate N-acetyl-9-O-acetylneuraminate (Neu5,9Ac2) in the cytosol and of the diacetylated sialate residues of sialylglycoconjugates in the lysosomes. Together with the sialate-O-acetyltransferase they regulate the balance of acetylated sialoglycoconjugates, key players in various processes such as cell-cell interactions, host-pathogen recognition, and tumor antigenicity. This chain is Sialate O-acetylesterase (Siae), found in Rattus norvegicus (Rat).